A 198-amino-acid polypeptide reads, in one-letter code: Small ribosomal subunit protein uS11 (198 aa).

Composition is skewed to low complexity over residues 1-11 and 19-58; these read MSGTEAGAGEP and EAAQ…TAQP. Disordered stretches follow at residues 1–72 and 178–198; these read MSGT…TPAD and DVTP…GRRV. Positions 187-198 are enriched in basic residues; that stretch reads TRKKGGKRGRRV.

This sequence belongs to the universal ribosomal protein uS11 family. As to quaternary structure, part of the 30S ribosomal subunit.

Functionally, located on the platform of the 30S subunit. This is Small ribosomal subunit protein uS11 from Cenarchaeum symbiosum (strain A).